Reading from the N-terminus, the 181-residue chain is Caltractin ICL1d (181 aa).

Positions 1–29 (MARRGQQPPPQQAPPAQKNQTGKFNPAEF) are disordered. EF-hand domains are found at residues 37 to 72 (EEVL…LGFE), 73 to 108 (AKNQ…RISE), 110 to 145 (DSKA…LGET), and 146 to 181 (MDDS…KTFA). Asp50, Asp52, Thr54, Ser56, Glu61, Asp86, Asp88, Ser90, Gln92, and Glu97 together coordinate Ca(2+).

Belongs to the centrin family. In terms of assembly, monomer.

The protein localises to the cytoplasm. The protein resides in the cytoskeleton. Plays a fundamental role in microtubule organizing center structure and function. Component of the infraciliary lattice (ICL) and the ciliary basal bodies. The protein is Caltractin ICL1d (Icl1d) of Paramecium tetraurelia.